The following is an 867-amino-acid chain: Armadillo repeat-containing protein 2 (867 aa).

2 disordered regions span residues 1-115 (MLSP…CFSF) and 214-252 (TSLPSHLKNGGDQGKRHARASSCPSSSDLSRLQTKAVPK). 3 stretches are compositionally biased toward polar residues: residues 18-28 (PSVSKQKTSAE), 40-50 (VRTQRPFTPQE), and 60-69 (SSRTSENRPP). Composition is skewed to low complexity over residues 70–81 (SSFSLHASSFES) and 234–243 (SSCPSSSDLS). ARM repeat units lie at residues 262–301 (IEVDEVFWNTRIVPILRELEKEENIETVCAACTQLHHALE), 304–344 (NMLG…ALKV), 363–403 (EKND…SIKF), 408–449 (LGFL…HLLV), 462–503 (SLVR…KLTS), 506–547 (DCCT…NLTA), 551–589 (QAREQFSKEKGSIQTLLSLFQTFHQLDLHSQKPVGQRGE), 591–616 (HRAQRPPSEAEDVLIKLTRVLANIAI), 619–662 (GVGP…NLSY), 664–705 (QVKN…NLSQ), 707–746 (HDVCDFIVQNNVHRFMMALLDAQHQDICFSACGVLLNLTV), and 748–790 (KDKR…NFSE).

In terms of tissue distribution, expressed at higher level in testis.

Its function is as follows. Required for sperm flagellum axoneme organization and function. Involved in axonemal central pair complex assembly and/or stability. The polypeptide is Armadillo repeat-containing protein 2 (Homo sapiens (Human)).